A 681-amino-acid polypeptide reads, in one-letter code: Type VI secretion system spike protein VgrG2 (681 aa).

A disordered region spans residues 284-309 (AVAGSGKSNSSALQPGQTFSLTEHPN). Over residues 289 to 309 (GKSNSSALQPGQTFSLTEHPN) the composition is skewed to polar residues.

This sequence belongs to the VgrG protein family.

In terms of biological role, part of the type VI secretion system specialized secretion system, which delivers several virulence factors in both prokaryotic and eukaryotic cells during infection. Plays an essential role in bacterial mobility and biofilm formation. The protein is Type VI secretion system spike protein VgrG2 of Aeromonas hydrophila.